The sequence spans 543 residues: Carboxypeptidase Y homolog A (543 aa).

The N-terminal stretch at 1-17 is a signal peptide; it reads MKFLTTGLLATAALAAA. The propeptide occupies 18–124; the sequence is QEQHVLQAED…KLHNYDLRVK (107 aa). Intrachain disulfides connect cysteine 179–cysteine 419, cysteine 313–cysteine 327, cysteine 337–cysteine 360, cysteine 344–cysteine 353, and cysteine 382–cysteine 389. Asparagine 210 carries N-linked (GlcNAc...) asparagine glycosylation. The active site involves serine 266. The active site involves aspartate 458. N-linked (GlcNAc...) asparagine glycosylation is present at asparagine 509. Histidine 520 is an active-site residue.

Belongs to the peptidase S10 family.

Its subcellular location is the vacuole. It catalyses the reaction Release of a C-terminal amino acid with broad specificity.. Its function is as follows. Vacuolar carboxypeptidase involved in degradation of small peptides. Digests preferentially peptides containing an aliphatic or hydrophobic residue in P1' position, as well as methionine, leucine or phenylalanine in P1 position of ester substrate. The protein is Carboxypeptidase Y homolog A (cpyA) of Trichophyton verrucosum (strain HKI 0517).